The chain runs to 555 residues: Formate--tetrahydrofolate ligase (555 aa).

Residue 65-72 (TPAGEGKS) coordinates ATP.

The protein belongs to the formate--tetrahydrofolate ligase family.

The enzyme catalyses (6S)-5,6,7,8-tetrahydrofolate + formate + ATP = (6R)-10-formyltetrahydrofolate + ADP + phosphate. It participates in one-carbon metabolism; tetrahydrofolate interconversion. The sequence is that of Formate--tetrahydrofolate ligase from Staphylococcus aureus (strain USA300).